Reading from the N-terminus, the 280-residue chain is MLMQIADFEIGLNNPLFLIAGPCVIESEALVMDVAGELKSITQQLDMPFIFKASFDKANRSSHLSYRGPGIEKGLTILEKVKKTLEVPIITDVHEDTPLQEVAAVVDVLQTPAFLCRQSNFIRSVAACGKPVNIKKGQFLAPWEMKQVVAKAWATGNKKIMVCERGYSFGYNNLISDMRALAILRETACPVIFDATHSVQLPGGHGTNSGGQREFVPVLARAATAAGIAGIFMETHPDPDRALSDGPNSWPLAKMQPLLETLKELDKVVKNAGFLEQSSE.

The protein belongs to the KdsA family.

It is found in the cytoplasm. It catalyses the reaction D-arabinose 5-phosphate + phosphoenolpyruvate + H2O = 3-deoxy-alpha-D-manno-2-octulosonate-8-phosphate + phosphate. The protein operates within carbohydrate biosynthesis; 3-deoxy-D-manno-octulosonate biosynthesis; 3-deoxy-D-manno-octulosonate from D-ribulose 5-phosphate: step 2/3. It functions in the pathway bacterial outer membrane biogenesis; lipopolysaccharide biosynthesis. This Coxiella burnetii (strain CbuG_Q212) (Coxiella burnetii (strain Q212)) protein is 2-dehydro-3-deoxyphosphooctonate aldolase.